A 318-amino-acid polypeptide reads, in one-letter code: Very-long-chain 3-oxoacyl-CoA reductase-B (318 aa).

Residues 15–35 traverse the membrane as a helical segment; that stretch reads FWYLGVVAATWWGLRAAWCLL. 54-83 is an NADP(+) binding site; sequence GKWAVVTGATDGIGKAYAEELARRGMNIVL. 2 helical membrane-spanning segments follow: residues 187–207 and 281–301; these read GVVL…LTVY and AITG…SMGM. Ser-194 is a binding site for substrate. The Proton acceptor role is filled by Tyr-207.

It belongs to the short-chain dehydrogenases/reductases (SDR) family. 17-beta-HSD 3 subfamily.

The protein resides in the endoplasmic reticulum membrane. It catalyses the reaction a very-long-chain (3R)-3-hydroxyacyl-CoA + NADP(+) = a very-long-chain 3-oxoacyl-CoA + NADPH + H(+). The enzyme catalyses 17beta-estradiol + NAD(+) = estrone + NADH + H(+). The catalysed reaction is 17beta-estradiol + NADP(+) = estrone + NADPH + H(+). It participates in lipid metabolism; fatty acid biosynthesis. The protein operates within steroid biosynthesis; estrogen biosynthesis. Functionally, catalyzes the second of the four reactions of the long-chain fatty acids elongation cycle. This endoplasmic reticulum-bound enzymatic process, allows the addition of two carbons to the chain of long- and very long-chain fatty acids/VLCFAs per cycle. This enzyme has a 3-ketoacyl-CoA reductase activity, reducing 3-ketoacyl-CoA to 3-hydroxyacyl-CoA, within each cycle of fatty acid elongation. Thereby, it may participate in the production of VLCFAs of different chain lengths that are involved in multiple biological processes as precursors of membrane lipids and lipid mediators. May also catalyze the transformation of estrone (E1) into estradiol (E2) and play a role in estrogen formation. The chain is Very-long-chain 3-oxoacyl-CoA reductase-B (hsd17b12-b) from Xenopus laevis (African clawed frog).